A 316-amino-acid chain; its full sequence is Ornithine carbamoyltransferase (316 aa).

Carbamoyl phosphate is bound by residues 59–62 (STRT), Gln86, Arg110, and 137–140 (HPCQ). Residues Asn168, Asp232, and 236–237 (SM) contribute to the L-ornithine site. Carbamoyl phosphate is bound by residues 273 to 274 (CL) and Arg301.

The protein belongs to the aspartate/ornithine carbamoyltransferase superfamily. OTCase family.

It localises to the cytoplasm. It catalyses the reaction carbamoyl phosphate + L-ornithine = L-citrulline + phosphate + H(+). Its pathway is amino-acid degradation; L-arginine degradation via ADI pathway; carbamoyl phosphate from L-arginine: step 2/2. Its function is as follows. Reversibly catalyzes the transfer of the carbamoyl group from carbamoyl phosphate (CP) to the N(epsilon) atom of ornithine (ORN) to produce L-citrulline. This chain is Ornithine carbamoyltransferase, found in Listeria monocytogenes serotype 4a (strain HCC23).